We begin with the raw amino-acid sequence, 219 residues long: uncharacterized protein (219 aa).

Ser23 is modified (phosphoserine). Residue Lys137 forms a Glycyl lysine isopeptide (Lys-Gly) (interchain with G-Cter in SUMO) linkage.

Its subcellular location is the cytoplasm. This is an uncharacterized protein from Saccharomyces cerevisiae (strain ATCC 204508 / S288c) (Baker's yeast).